The following is a 485-amino-acid chain: MAYIIQGETGDWEIVIGLEVHAQVISKAKLFSGAATEFGAEPNTQVSFIDAGFPGMLPVINEVCVEQAVRTGLGLKAKINLTSVFARKNYFYADLPQGYQISQYDQPIVGEGELILDLPDGGTRTVGIERLHLEQDAGKSIHDMHPSKSFIDLNRSGVALMEIVSKPDLRSPEEAGLYLTKLRSILRYLETCDGNMQEGSMRCDANVSVRPVGSTELRTRCEIKNVNSIRFVQQAIEFEARRHIDVYESGGEIRQETRLFDSVKGETRSMRSKEHAHDYRYFPDPDLLPLVIEQSFVDGIKSGLPELPDEKKARFMAEYGLNAYDAGVLVAEKASAEFFETVAKGRDSKMACNWVMGDFFASLNATGKTIENPPVTAANLGQLIDLIKDGTLSGRLAKDVFALMVETGKAPAVLVEERGLKQVTDTGAIEAAVDAVISANPDKVQQVKDGKTALLGWFTGQVMKSTQGKANPAMVNEMLSKKILG.

The protein belongs to the GatB/GatE family. GatB subfamily. As to quaternary structure, heterotrimer of A, B and C subunits.

It catalyses the reaction L-glutamyl-tRNA(Gln) + L-glutamine + ATP + H2O = L-glutaminyl-tRNA(Gln) + L-glutamate + ADP + phosphate + H(+). The enzyme catalyses L-aspartyl-tRNA(Asn) + L-glutamine + ATP + H2O = L-asparaginyl-tRNA(Asn) + L-glutamate + ADP + phosphate + 2 H(+). Functionally, allows the formation of correctly charged Asn-tRNA(Asn) or Gln-tRNA(Gln) through the transamidation of misacylated Asp-tRNA(Asn) or Glu-tRNA(Gln) in organisms which lack either or both of asparaginyl-tRNA or glutaminyl-tRNA synthetases. The reaction takes place in the presence of glutamine and ATP through an activated phospho-Asp-tRNA(Asn) or phospho-Glu-tRNA(Gln). The sequence is that of Aspartyl/glutamyl-tRNA(Asn/Gln) amidotransferase subunit B from Paramagnetospirillum magneticum (strain ATCC 700264 / AMB-1) (Magnetospirillum magneticum).